The sequence spans 286 residues: 4-hydroxy-tetrahydrodipicolinate synthase (286 aa).

Thr42 contributes to the pyruvate binding site. Tyr129 (proton donor/acceptor) is an active-site residue. Lys157 functions as the Schiff-base intermediate with substrate in the catalytic mechanism. Residue Ile196 coordinates pyruvate.

The protein belongs to the DapA family. In terms of assembly, homotetramer; dimer of dimers.

It localises to the cytoplasm. It carries out the reaction L-aspartate 4-semialdehyde + pyruvate = (2S,4S)-4-hydroxy-2,3,4,5-tetrahydrodipicolinate + H2O + H(+). The protein operates within amino-acid biosynthesis; L-lysine biosynthesis via DAP pathway; (S)-tetrahydrodipicolinate from L-aspartate: step 3/4. In terms of biological role, catalyzes the condensation of (S)-aspartate-beta-semialdehyde [(S)-ASA] and pyruvate to 4-hydroxy-tetrahydrodipicolinate (HTPA). The chain is 4-hydroxy-tetrahydrodipicolinate synthase from Chlamydia trachomatis serovar A (strain ATCC VR-571B / DSM 19440 / HAR-13).